A 338-amino-acid polypeptide reads, in one-letter code: Aspartate carbamoyltransferase catalytic subunit (338 aa).

Carbamoyl phosphate contacts are provided by R72 and T73. K100 is a binding site for L-aspartate. 3 residues coordinate carbamoyl phosphate: R122, H152, and Q155. L-aspartate is bound by residues R186 and R243. Carbamoyl phosphate is bound by residues G284 and P285.

Belongs to the aspartate/ornithine carbamoyltransferase superfamily. ATCase family. Heterododecamer (2C3:3R2) of six catalytic PyrB chains organized as two trimers (C3), and six regulatory PyrI chains organized as three dimers (R2).

The enzyme catalyses carbamoyl phosphate + L-aspartate = N-carbamoyl-L-aspartate + phosphate + H(+). It participates in pyrimidine metabolism; UMP biosynthesis via de novo pathway; (S)-dihydroorotate from bicarbonate: step 2/3. Catalyzes the condensation of carbamoyl phosphate and aspartate to form carbamoyl aspartate and inorganic phosphate, the committed step in the de novo pyrimidine nucleotide biosynthesis pathway. This Acinetobacter baumannii (strain SDF) protein is Aspartate carbamoyltransferase catalytic subunit.